The sequence spans 1011 residues: Rap guanine nucleotide exchange factor 4 (1011 aa).

Positions 216-291 (SRAPHMIRDR…DKYLFYRFLD (76 aa)) constitute a DEP domain. 3',5'-cyclic AMP-binding positions include 422 to 425 (GKLA) and 432 to 433 (RA). The 139-residue stretch at 496-634 (QKYTVMSGTP…ELEKIVKQIS (139 aa)) folds into the N-terminal Ras-GEF domain. One can recognise a Ras-GEF domain in the interval 772-1009 (SSKDLAYQMT…SQMSHRLEPR (238 aa)).

As to quaternary structure, interacts with RAP1B, RIMS1 and RIMS2. Probably part of a complex with RIMS2 and GTP-activated RAB3A. As to expression, expressed in cerebellum, pituitary, adrenal gland and liver.

The protein resides in the cytoplasm. Its subcellular location is the membrane. Functionally, guanine nucleotide exchange factor (GEF) for RAP1A, RAP1B and RAP2A small GTPases that is activated by binding cAMP. Seems not to activate RAB3A. Involved in cAMP-dependent, PKA-independent exocytosis through interaction with RIMS2. The protein is Rap guanine nucleotide exchange factor 4 (Rapgef4) of Mus musculus (Mouse).